A 1228-amino-acid chain; its full sequence is ABC transporter B family member 16 (1228 aa).

A run of 6 helical transmembrane segments spans residues 22 to 42 (MGLG…LFFI), 69 to 89 (LAML…GYCW), 145 to 167 (LPNI…MLLW), 171 to 193 (IVGF…ALIG), 251 to 271 (GIAI…TWYG), and 283 to 303 (GTVS…GQAL). The ABC transmembrane type-1 1 domain occupies 22 to 311 (MGLGLIGAVG…ALSNLKYFSE (290 aa)). An ABC transporter 1 domain is found at 346–582 (VEFNNVKCKY…DGKYTSLVRL (237 aa)). Position 381-388 (381-388 (GGSGSGKS)) interacts with ATP. N-linked (GlcNAc...) asparagine glycosylation is found at asparagine 529, asparagine 593, and asparagine 628. Positions 658–946 (ALCGCLSASL…AGTMTTDLAK (289 aa)) constitute an ABC transmembrane type-1 2 domain. A run of 2 helical transmembrane segments spans residues 667 to 687 (LGGA…SVFF) and 700 to 720 (IYVL…ISQQ). Asparagine 755 carries N-linked (GlcNAc...) asparagine glycosylation. Helical transmembrane passes span 781-801 (LLVQ…VIAW) and 805-825 (IVMI…RVLL). N-linked (GlcNAc...) asparagine glycosylation is present at asparagine 827. The next 2 helical transmembrane spans lie at 881-901 (SWLA…TSAL) and 920-940 (FFEL…AGTM). Positions 981-1219 (ITFLNVDFAY…GPTGSYFSLV (239 aa)) constitute an ABC transporter 2 domain. Residue asparagine 1001 is glycosylated (N-linked (GlcNAc...) asparagine). Residue 1016–1023 (GPSRSGKS) participates in ATP binding.

This sequence belongs to the ABC transporter superfamily. ABCB family. Multidrug resistance exporter (TC 3.A.1.201) subfamily.

The protein localises to the membrane. The chain is ABC transporter B family member 16 (ABCB16) from Arabidopsis thaliana (Mouse-ear cress).